The primary structure comprises 324 residues: Beta-ketoacyl-[acyl-carrier-protein] synthase III (324 aa).

Active-site residues include cysteine 112 and histidine 249. Residues 250–254 are ACP-binding; it reads QANRR. Residue asparagine 279 is part of the active site.

Belongs to the thiolase-like superfamily. FabH family. Homodimer.

It is found in the cytoplasm. It catalyses the reaction malonyl-[ACP] + acetyl-CoA + H(+) = 3-oxobutanoyl-[ACP] + CO2 + CoA. Its pathway is lipid metabolism; fatty acid biosynthesis. Catalyzes the condensation reaction of fatty acid synthesis by the addition to an acyl acceptor of two carbons from malonyl-ACP. Catalyzes the first condensation reaction which initiates fatty acid synthesis and may therefore play a role in governing the total rate of fatty acid production. Possesses both acetoacetyl-ACP synthase and acetyl transacylase activities. Its substrate specificity determines the biosynthesis of branched-chain and/or straight-chain of fatty acids. This chain is Beta-ketoacyl-[acyl-carrier-protein] synthase III, found in Streptococcus pyogenes serotype M2 (strain MGAS10270).